The sequence spans 360 residues: CFA/I fimbrial subunit E (360 aa).

It is found in the fimbrium. This is CFA/I fimbrial subunit E (cfaE) from Escherichia coli.